The chain runs to 216 residues: Guanylate kinase (216 aa).

The Guanylate kinase-like domain occupies 12–191 (GLLFVISSPS…CVKQVKNILT (180 aa)). ATP is bound at residue 19-26 (SPSGAGKS).

The protein belongs to the guanylate kinase family.

It is found in the cytoplasm. The enzyme catalyses GMP + ATP = GDP + ADP. Essential for recycling GMP and indirectly, cGMP. This chain is Guanylate kinase, found in Zymomonas mobilis subsp. mobilis (strain ATCC 31821 / ZM4 / CP4).